A 134-amino-acid chain; its full sequence is UPF0357 protein YCL012C (134 aa).

The first 23 residues, Met1 to Ala23, serve as a signal peptide directing secretion. Ser71 and Ser74 each carry phosphoserine. Lys86 participates in a covalent cross-link: Glycyl lysine isopeptide (Lys-Gly) (interchain with G-Cter in ubiquitin).

Belongs to the UPF0357 family.

This Saccharomyces cerevisiae (strain ATCC 204508 / S288c) (Baker's yeast) protein is UPF0357 protein YCL012C.